Consider the following 932-residue polypeptide: UPF0182 protein Syncc9902_1151 (932 aa).

9 consecutive transmembrane segments (helical) span residues 4–24 (FLWI…VEWV), 40–60 (MLQL…VLWL), 85–105 (VLMV…DLAI), 124–144 (MASE…VSLC), 151–171 (WVAV…WGVW), 201–221 (IQLG…HAVW), 243–263 (YRWL…LVWL), 293–313 (LLAF…IGHL), and 315–335 (RLLL…TPLT).

This sequence belongs to the UPF0182 family.

The protein resides in the cell membrane. The protein is UPF0182 protein Syncc9902_1151 of Synechococcus sp. (strain CC9902).